A 415-amino-acid chain; its full sequence is ATP-dependent RNA helicase RhlB (415 aa).

Residues 9-37 (QRFSALPLHPIVRGALAKKGFDFCTPIQA) carry the Q motif motif. A Helicase ATP-binding domain is found at 40–218 (LPISLNGRDV…FEDMNDPEYI (179 aa)). Residue 53–60 (AQTGTGKT) participates in ATP binding. The DEAD box motif lies at 164–167 (DEAD). The 149-residue stretch at 241–389 (DKMALLLTLM…VSQYETEALL (149 aa)) folds into the Helicase C-terminal domain.

It belongs to the DEAD box helicase family. RhlB subfamily. As to quaternary structure, component of the RNA degradosome, which is a multiprotein complex involved in RNA processing and mRNA degradation.

Its subcellular location is the cytoplasm. The catalysed reaction is ATP + H2O = ADP + phosphate + H(+). Its function is as follows. DEAD-box RNA helicase involved in RNA degradation. Has RNA-dependent ATPase activity and unwinds double-stranded RNA. This Haemophilus influenzae (strain PittGG) protein is ATP-dependent RNA helicase RhlB.